The sequence spans 181 residues: Small ribosomal subunit protein bS16 (181 aa).

Positions 150-181 (KKAAEEAAKAAAEAPAEEAAPAEETATEAAAE) are disordered. Low complexity predominate over residues 158–181 (KAAAEAPAEEAAPAEETATEAAAE).

Belongs to the bacterial ribosomal protein bS16 family.

This is Small ribosomal subunit protein bS16 from Bacteroides fragilis (strain YCH46).